Here is a 204-residue protein sequence, read N- to C-terminus: Holliday junction branch migration complex subunit RuvA (204 aa).

The interval 1–64 (MIAQIRGKLI…QDSILLVGFC (64 aa)) is domain I. The interval 65–143 (TENEKQLFKL…GWTSKEQITF (79 aa)) is domain II. A flexible linker region spans residues 144–154 (INNKKDAIDQS). The tract at residues 154-204 (SVMEEDAISALINLGYKSQAAKDAIDRVISEGGENKSLDVILKKALKVLAM) is domain III.

Belongs to the RuvA family. As to quaternary structure, homotetramer. Forms an RuvA(8)-RuvB(12)-Holliday junction (HJ) complex. HJ DNA is sandwiched between 2 RuvA tetramers; dsDNA enters through RuvA and exits via RuvB. An RuvB hexamer assembles on each DNA strand where it exits the tetramer. Each RuvB hexamer is contacted by two RuvA subunits (via domain III) on 2 adjacent RuvB subunits; this complex drives branch migration. In the full resolvosome a probable DNA-RuvA(4)-RuvB(12)-RuvC(2) complex forms which resolves the HJ.

Its subcellular location is the cytoplasm. Its function is as follows. The RuvA-RuvB-RuvC complex processes Holliday junction (HJ) DNA during genetic recombination and DNA repair, while the RuvA-RuvB complex plays an important role in the rescue of blocked DNA replication forks via replication fork reversal (RFR). RuvA specifically binds to HJ cruciform DNA, conferring on it an open structure. The RuvB hexamer acts as an ATP-dependent pump, pulling dsDNA into and through the RuvAB complex. HJ branch migration allows RuvC to scan DNA until it finds its consensus sequence, where it cleaves and resolves the cruciform DNA. The polypeptide is Holliday junction branch migration complex subunit RuvA (Syntrophus aciditrophicus (strain SB)).